The primary structure comprises 289 residues: 4-hydroxy-3-methylbut-2-enyl diphosphate reductase (289 aa).

Cys-13 lines the [4Fe-4S] cluster pocket. The (2E)-4-hydroxy-3-methylbut-2-enyl diphosphate site is built by His-42 and His-74. The dimethylallyl diphosphate site is built by His-42 and His-74. Isopentenyl diphosphate contacts are provided by His-42 and His-74. A [4Fe-4S] cluster-binding site is contributed by Cys-96. Position 124 (His-124) interacts with (2E)-4-hydroxy-3-methylbut-2-enyl diphosphate. His-124 contributes to the dimethylallyl diphosphate binding site. Residue His-124 coordinates isopentenyl diphosphate. Glu-126 acts as the Proton donor in catalysis. Thr-165 serves as a coordination point for (2E)-4-hydroxy-3-methylbut-2-enyl diphosphate. A [4Fe-4S] cluster-binding site is contributed by Cys-193. 3 residues coordinate (2E)-4-hydroxy-3-methylbut-2-enyl diphosphate: Ser-221, Asn-223, and Ser-265. Dimethylallyl diphosphate contacts are provided by Ser-221, Asn-223, and Ser-265. Positions 221, 223, and 265 each coordinate isopentenyl diphosphate.

This sequence belongs to the IspH family. [4Fe-4S] cluster is required as a cofactor.

It carries out the reaction isopentenyl diphosphate + 2 oxidized [2Fe-2S]-[ferredoxin] + H2O = (2E)-4-hydroxy-3-methylbut-2-enyl diphosphate + 2 reduced [2Fe-2S]-[ferredoxin] + 2 H(+). The enzyme catalyses dimethylallyl diphosphate + 2 oxidized [2Fe-2S]-[ferredoxin] + H2O = (2E)-4-hydroxy-3-methylbut-2-enyl diphosphate + 2 reduced [2Fe-2S]-[ferredoxin] + 2 H(+). It participates in isoprenoid biosynthesis; dimethylallyl diphosphate biosynthesis; dimethylallyl diphosphate from (2E)-4-hydroxy-3-methylbutenyl diphosphate: step 1/1. The protein operates within isoprenoid biosynthesis; isopentenyl diphosphate biosynthesis via DXP pathway; isopentenyl diphosphate from 1-deoxy-D-xylulose 5-phosphate: step 6/6. Its activity is regulated as follows. Highly sensitive to dioxygen. In terms of biological role, catalyzes the conversion of 1-hydroxy-2-methyl-2-(E)-butenyl 4-diphosphate (HMBPP) into a mixture of isopentenyl diphosphate (IPP) and dimethylallyl diphosphate (DMAPP). Acts in the terminal step of the DOXP/MEP pathway for isoprenoid precursor biosynthesis. In Aquifex aeolicus (strain VF5), this protein is 4-hydroxy-3-methylbut-2-enyl diphosphate reductase.